We begin with the raw amino-acid sequence, 257 residues long: UPF0246 protein Lcho_2652 (257 aa).

Belongs to the UPF0246 family.

This Leptothrix cholodnii (strain ATCC 51168 / LMG 8142 / SP-6) (Leptothrix discophora (strain SP-6)) protein is UPF0246 protein Lcho_2652.